We begin with the raw amino-acid sequence, 263 residues long: Acyl-[acyl-carrier-protein]--UDP-N-acetylglucosamine O-acyltransferase (263 aa).

The protein belongs to the transferase hexapeptide repeat family. LpxA subfamily. In terms of assembly, homotrimer.

Its subcellular location is the cytoplasm. It carries out the reaction a (3R)-hydroxyacyl-[ACP] + UDP-N-acetyl-alpha-D-glucosamine = a UDP-3-O-[(3R)-3-hydroxyacyl]-N-acetyl-alpha-D-glucosamine + holo-[ACP]. The protein operates within glycolipid biosynthesis; lipid IV(A) biosynthesis; lipid IV(A) from (3R)-3-hydroxytetradecanoyl-[acyl-carrier-protein] and UDP-N-acetyl-alpha-D-glucosamine: step 1/6. Involved in the biosynthesis of lipid A, a phosphorylated glycolipid that anchors the lipopolysaccharide to the outer membrane of the cell. This Campylobacter lari (strain RM2100 / D67 / ATCC BAA-1060) protein is Acyl-[acyl-carrier-protein]--UDP-N-acetylglucosamine O-acyltransferase.